Here is a 106-residue protein sequence, read N- to C-terminus: MTLRDILNKLMGRQPASAAKARERLQLVLAHDRTDLSPDLLEQMREEILSVVAKYVEIDFEEGAVSLETEDRMTALVANLPIKRTLSGEIKIKEQSSADNSAKAVS.

This sequence belongs to the MinE family.

Its function is as follows. Prevents the cell division inhibition by proteins MinC and MinD at internal division sites while permitting inhibition at polar sites. This ensures cell division at the proper site by restricting the formation of a division septum at the midpoint of the long axis of the cell. This is Cell division topological specificity factor from Prochlorococcus marinus (strain SARG / CCMP1375 / SS120).